An 83-amino-acid chain; its full sequence is Protein CASPARIAN STRIP INTEGRITY FACTOR 2 (83 aa).

An N-terminal signal peptide occupies residues 1–28 (MGLLPLVKKLGFIIFLLVSASAFALCSA). The interval 61–83 (SRDYGHSSPKPKLVRPPFKLIPN) is disordered. Tyr64 is subject to Sulfotyrosine. Pro69 and Pro71 each carry hydroxyproline.

In terms of assembly, interacts with the specific receptor kinases GSO1 and GSO2. Expressed exclusively in the root stele.

In terms of biological role, peptide hormone required for contiguous Casparian strip diffusion barrier formation in roots via the regulation of CASPs protein expression and distribution in a GSO1-GSO2 signaling pathway. The Casparian strip is required for ion homeostasis (e.g. iron and potassium ions). The protein is Protein CASPARIAN STRIP INTEGRITY FACTOR 2 of Arabidopsis thaliana (Mouse-ear cress).